A 92-amino-acid polypeptide reads, in one-letter code: UPF0250 protein VC0395_A0469/VC395_0960 (92 aa).

It belongs to the UPF0250 family.

This chain is UPF0250 protein VC0395_A0469/VC395_0960, found in Vibrio cholerae serotype O1 (strain ATCC 39541 / Classical Ogawa 395 / O395).